The following is a 592-amino-acid chain: NADH-quinone oxidoreductase subunit C/D (592 aa).

The interval 1-183 (MLTEFNSIPA…GPYILTEEKE (183 aa)) is NADH dehydrogenase I subunit C. Positions 207-592 (DFMFLNLGPN…IDFVMADVDR (386 aa)) are NADH dehydrogenase I subunit D.

In the N-terminal section; belongs to the complex I 30 kDa subunit family. This sequence in the C-terminal section; belongs to the complex I 49 kDa subunit family. As to quaternary structure, NDH-1 is composed of 13 different subunits. Subunits NuoB, CD, E, F, and G constitute the peripheral sector of the complex.

It localises to the cell inner membrane. The enzyme catalyses a quinone + NADH + 5 H(+)(in) = a quinol + NAD(+) + 4 H(+)(out). NDH-1 shuttles electrons from NADH, via FMN and iron-sulfur (Fe-S) centers, to quinones in the respiratory chain. The immediate electron acceptor for the enzyme in this species is believed to be ubiquinone. Couples the redox reaction to proton translocation (for every two electrons transferred, four hydrogen ions are translocated across the cytoplasmic membrane), and thus conserves the redox energy in a proton gradient. This Acidiphilium cryptum (strain JF-5) protein is NADH-quinone oxidoreductase subunit C/D.